We begin with the raw amino-acid sequence, 54 residues long: uncharacterized protein (54 aa).

The disordered stretch occupies residues 1–54 (MWTLKARKEHTGISGKPTARTDRHGSTRSGDSELQASARRFSRLPDRCGAQGVT).

This is an uncharacterized protein from Mycobacterium tuberculosis (strain ATCC 25618 / H37Rv).